Consider the following 112-residue polypeptide: Putative membrane protein insertion efficiency factor (112 aa).

It belongs to the UPF0161 family.

It localises to the cell inner membrane. In terms of biological role, could be involved in insertion of integral membrane proteins into the membrane. In Bradyrhizobium diazoefficiens (strain JCM 10833 / BCRC 13528 / IAM 13628 / NBRC 14792 / USDA 110), this protein is Putative membrane protein insertion efficiency factor.